A 1588-amino-acid polypeptide reads, in one-letter code: Pentafunctional AROM polypeptide (1588 aa).

The tract at residues Met-1–Asp-392 is 3-dehydroquinate synthase. NAD(+) contacts are provided by residues Asp-43–Asn-45, Glu-78–Lys-81, Gly-109–Val-111, and Asp-114. Arg-125 serves as a coordination point for 7-phospho-2-dehydro-3-deoxy-D-arabino-heptonate. Thr-134–Ser-135 provides a ligand contact to NAD(+). Positions 141 and 147 each coordinate 7-phospho-2-dehydro-3-deoxy-D-arabino-heptonate. Residue Lys-156 participates in NAD(+) binding. Asn-157 serves as a coordination point for 7-phospho-2-dehydro-3-deoxy-D-arabino-heptonate. Residues Trp-174–Thr-177 and Asn-185 contribute to the NAD(+) site. Position 189 (Glu-189) interacts with Zn(2+). 7-phospho-2-dehydro-3-deoxy-D-arabino-heptonate contacts are provided by residues Glu-189–Lys-192 and Lys-258. The Proton acceptor; for 3-dehydroquinate synthase activity role is filled by Glu-268. 7-phospho-2-dehydro-3-deoxy-D-arabino-heptonate contacts are provided by residues Arg-272 to Asn-276 and His-279. Residue His-279 coordinates Zn(2+). Catalysis depends on His-283, which acts as the Proton acceptor; for 3-dehydroquinate synthase activity. The 7-phospho-2-dehydro-3-deoxy-D-arabino-heptonate site is built by His-295 and Lys-364. Residue His-295 coordinates Zn(2+). The interval Val-405–Ala-871 is EPSP synthase. The active-site For EPSP synthase activity is the Cys-853. The shikimate kinase stretch occupies residues Ser-890–Cys-1080. Gly-895 to Thr-902 contributes to the ATP binding site. The tract at residues Leu-1081–Gln-1293 is 3-dehydroquinase. Catalysis depends on His-1198, which acts as the Proton acceptor; for 3-dehydroquinate dehydratase activity. Lys-1227 (schiff-base intermediate with substrate; for 3-dehydroquinate dehydratase activity) is an active-site residue. Residues Pro-1306–Glu-1588 form a shikimate dehydrogenase region.

In the N-terminal section; belongs to the sugar phosphate cyclases superfamily. Dehydroquinate synthase family. It in the 2nd section; belongs to the EPSP synthase family. This sequence in the 3rd section; belongs to the shikimate kinase family. The protein in the 4th section; belongs to the type-I 3-dehydroquinase family. In the C-terminal section; belongs to the shikimate dehydrogenase family. As to quaternary structure, homodimer. Zn(2+) serves as cofactor.

It localises to the cytoplasm. It carries out the reaction 7-phospho-2-dehydro-3-deoxy-D-arabino-heptonate = 3-dehydroquinate + phosphate. The catalysed reaction is 3-dehydroquinate = 3-dehydroshikimate + H2O. The enzyme catalyses shikimate + NADP(+) = 3-dehydroshikimate + NADPH + H(+). It catalyses the reaction shikimate + ATP = 3-phosphoshikimate + ADP + H(+). It carries out the reaction 3-phosphoshikimate + phosphoenolpyruvate = 5-O-(1-carboxyvinyl)-3-phosphoshikimate + phosphate. It functions in the pathway metabolic intermediate biosynthesis; chorismate biosynthesis; chorismate from D-erythrose 4-phosphate and phosphoenolpyruvate: step 2/7. It participates in metabolic intermediate biosynthesis; chorismate biosynthesis; chorismate from D-erythrose 4-phosphate and phosphoenolpyruvate: step 3/7. Its pathway is metabolic intermediate biosynthesis; chorismate biosynthesis; chorismate from D-erythrose 4-phosphate and phosphoenolpyruvate: step 4/7. The protein operates within metabolic intermediate biosynthesis; chorismate biosynthesis; chorismate from D-erythrose 4-phosphate and phosphoenolpyruvate: step 5/7. It functions in the pathway metabolic intermediate biosynthesis; chorismate biosynthesis; chorismate from D-erythrose 4-phosphate and phosphoenolpyruvate: step 6/7. The AROM polypeptide catalyzes 5 consecutive enzymatic reactions in prechorismate polyaromatic amino acid biosynthesis. The polypeptide is Pentafunctional AROM polypeptide (Saccharomyces cerevisiae (strain JAY291) (Baker's yeast)).